The sequence spans 158 residues: Lipoprotein signal peptidase (158 aa).

4 consecutive transmembrane segments (helical) span residues 7–27 (LFWI…YWVV), 38–58 (ILPG…FSLF), 67–87 (WLSL…PVLE), and 95–115 (GLIL…GYVV). Active-site residues include Asp116 and Asp132. A helical membrane pass occupies residues 125 to 145 (FAVFNMADSFISIGIVCLLLA).

It belongs to the peptidase A8 family.

The protein resides in the cell inner membrane. It carries out the reaction Release of signal peptides from bacterial membrane prolipoproteins. Hydrolyzes -Xaa-Yaa-Zaa-|-(S,diacylglyceryl)Cys-, in which Xaa is hydrophobic (preferably Leu), and Yaa (Ala or Ser) and Zaa (Gly or Ala) have small, neutral side chains.. The protein operates within protein modification; lipoprotein biosynthesis (signal peptide cleavage). Functionally, this protein specifically catalyzes the removal of signal peptides from prolipoproteins. This is Lipoprotein signal peptidase from Trichormus variabilis (strain ATCC 29413 / PCC 7937) (Anabaena variabilis).